The chain runs to 469 residues: Coumaroyl-CoA:anthocyanidin 3-O-glucoside-6''-O-coumaroyltransferase 1 (469 aa).

An N-acetylmethionine modification is found at Met1. Residues His173 and Asp410 each act as proton acceptor in the active site.

The protein belongs to the plant acyltransferase family. Highly expressed in flowers, leaves and roots. Lower levels of expression in stems and siliques.

Involved in the acylation of the 6'' position of the 3-O-glucose residue of anthocyanin. Also able to use flavonol 3-glucosides as the acyl acceptor. This chain is Coumaroyl-CoA:anthocyanidin 3-O-glucoside-6''-O-coumaroyltransferase 1 (3AT1), found in Arabidopsis thaliana (Mouse-ear cress).